The sequence spans 298 residues: Aspartate carbamoyltransferase catalytic subunit (298 aa).

R50 and T51 together coordinate carbamoyl phosphate. Residue K79 participates in L-aspartate binding. Residues R100, H128, and Q131 each coordinate carbamoyl phosphate. L-aspartate-binding residues include R160 and R221. Carbamoyl phosphate contacts are provided by L260 and P261.

It belongs to the aspartate/ornithine carbamoyltransferase superfamily. ATCase family. As to quaternary structure, heterooligomer of catalytic and regulatory chains.

It carries out the reaction carbamoyl phosphate + L-aspartate = N-carbamoyl-L-aspartate + phosphate + H(+). Its pathway is pyrimidine metabolism; UMP biosynthesis via de novo pathway; (S)-dihydroorotate from bicarbonate: step 2/3. Functionally, catalyzes the condensation of carbamoyl phosphate and aspartate to form carbamoyl aspartate and inorganic phosphate, the committed step in the de novo pyrimidine nucleotide biosynthesis pathway. This chain is Aspartate carbamoyltransferase catalytic subunit, found in Methanospirillum hungatei JF-1 (strain ATCC 27890 / DSM 864 / NBRC 100397 / JF-1).